The sequence spans 353 residues: Dihydroorotate dehydrogenase (quinone) (353 aa).

Residues 66–70 (AGFDK) and Thr90 each bind FMN. Lys70 provides a ligand contact to substrate. Residue 115–119 (NRMGF) coordinates substrate. Positions 143 and 176 each coordinate FMN. Position 176 (Asn176) interacts with substrate. The Nucleophile role is filled by Ser179. Asn181 serves as a coordination point for substrate. FMN is bound by residues Lys212 and Thr240. 241 to 242 (NT) is a binding site for substrate. Residues Gly264, Gly293, and 314–315 (YT) contribute to the FMN site.

The protein belongs to the dihydroorotate dehydrogenase family. Type 2 subfamily. As to quaternary structure, monomer. FMN is required as a cofactor.

The protein resides in the cell membrane. The enzyme catalyses (S)-dihydroorotate + a quinone = orotate + a quinol. It functions in the pathway pyrimidine metabolism; UMP biosynthesis via de novo pathway; orotate from (S)-dihydroorotate (quinone route): step 1/1. Its function is as follows. Catalyzes the conversion of dihydroorotate to orotate with quinone as electron acceptor. The polypeptide is Dihydroorotate dehydrogenase (quinone) (Mycolicibacterium vanbaalenii (strain DSM 7251 / JCM 13017 / BCRC 16820 / KCTC 9966 / NRRL B-24157 / PYR-1) (Mycobacterium vanbaalenii)).